Reading from the N-terminus, the 303-residue chain is Bidirectional sugar transporter SWEET14 (303 aa).

At 1–9 (MAGMSLQHP) the chain is on the extracellular side. A helical membrane pass occupies residues 10–30 (WAFAFGLLGNIISFMTYLAPL). Residues 13 to 98 (AFGLLGNIIS…AVYLVYAPKK (86 aa)) enclose the MtN3/slv 1 domain. The Cytoplasmic portion of the chain corresponds to 31–44 (PTFYRIYKSKSTQG). A helical transmembrane segment spans residues 45–65 (FQSVPYVVALFSAMLWIYYAL). At 66–72 (LKSDECL) the chain is on the extracellular side. Residues 73–93 (LITINSAGCVIETIYIAVYLV) traverse the membrane as a helical segment. Over 94-105 (YAPKKAKMFTAK) the chain is Cytoplasmic. The helical transmembrane segment at 106–126 (LLLLVNVGVFGLILLLTLLLS) threads the bilayer. Topologically, residues 127–133 (AGDRRIV) are extracellular. Residues 134–154 (VLGWVCVGFSVSVFVAPLSII) traverse the membrane as a helical segment. The region spanning 134-217 (VLGWVCVGFS…MGLYAMYRNS (84 aa)) is the MtN3/slv 2 domain. Topologically, residues 155 to 167 (RLVVRTKSVEFMP) are cytoplasmic. A helical transmembrane segment spans residues 168–188 (FSLSFSLTISAVVWFLYGLLI). Residues 189–192 (KDKY) lie on the Extracellular side of the membrane. A helical transmembrane segment spans residues 193-213 (VALPNVLGFSFGVIQMGLYAM). The Cytoplasmic portion of the chain corresponds to 214–303 (YRNSTPKAVL…AGAGEKKVAA (90 aa)). Residues 266-290 (HPVDVESPPAEAPPQEDDKAAAATA) form a disordered region.

Belongs to the SWEET sugar transporter family. As to quaternary structure, forms homooligomers and/or heterooligomers.

It localises to the cell membrane. In terms of biological role, mediates both low-affinity uptake and efflux of sugar across the plasma membrane. The protein is Bidirectional sugar transporter SWEET14 (SWEET14) of Oryza sativa subsp. indica (Rice).